Reading from the N-terminus, the 83-residue chain is Apolipoprotein C-I, acidic form (83 aa).

The signal sequence occupies residues 1–26; the sequence is MRLFLSLPVLVVVLSMVLEGPAPAQG.

This sequence belongs to the apolipoprotein C1 family.

It localises to the secreted. This Pan troglodytes (Chimpanzee) protein is Apolipoprotein C-I, acidic form (APOC1A).